The sequence spans 203 residues: MKLRWFAFLIVLLAGCSSKHDYTNPPWNAKVPVQRAMQWMPISQKAGAAWGVDPQLITAIIAIESGGNPNAVSKSNAIGLMQLKASTSGRDVYRRMGWSGEPTTSELKNPERNISMGAAYLNILETGPLAGIEDPKVLQYALVVSYANGAGALLRTFSSDRKKAISKINDLDADEFLEHVARNHPAPQAPRYIYKLEQALDAM.

The signal sequence occupies residues 1–15 (MKLRWFAFLIVLLAG). A lipid anchor (N-palmitoyl cysteine) is attached at C16. C16 carries S-diacylglycerol cysteine lipidation.

The protein belongs to the transglycosylase Slt family.

Its subcellular location is the cell outer membrane. It carries out the reaction Endolytic cleavage of the (1-&gt;4)-beta-glycosidic linkage between N-acetylmuramic acid (MurNAc) and N-acetylglucosamine (GlcNAc) residues in peptidoglycan with concomitant formation of a 1,6-anhydrobond in the MurNAc residue.. Murein-degrading enzyme. May play a role in recycling of muropeptides during cell elongation and/or cell division. Preferentially cleaves at a distance of more than two disaccharide units from the ends of the glycan chain. The protein is Endo-type membrane-bound lytic murein transglycosylase A of Escherichia coli (strain K12 / MC4100 / BW2952).